A 787-amino-acid polypeptide reads, in one-letter code: Transcriptional corepressor LEUNIG_HOMOLOG (787 aa).

A required for SEU-binding region spans residues 1-88 (MAQSNWEADK…IEAQQGKAKE (88 aa)). The region spanning 8 to 40 (ADKMLDVYIYDYLVKKKLHNTAKSFMTEGKVSP) is the LisH domain. The stretch at 77 to 106 (AYIEAQQGKAKEQQMQIQQLQMMRQAQMQR) forms a coiled coil. The segment at 299 to 413 (NMTNSPMYGG…TPSTHTPVDG (115 aa)) is disordered. 2 stretches are compositionally biased toward low complexity: residues 336-346 (SIGSPMQSSSS) and 355-372 (QQSSSQQQDHLLSQQSQQ). A compositionally biased stretch (polar residues) spans 380-409 (PSSSGPANSTGTGNTVGPSNSQPSTPSTHT). 7 WD repeats span residues 508 to 547 (KSASKVICCSFSYDGKLLASAGHDKKVFIWNMETLQVEST), 550 to 589 (EHAHIITDVRFRPNSTQLATSSFDKTIKIWDASDPGYFLR), 593 to 633 (GHAA…VRAV), 635 to 671 (GASTQVRFQPRTGQFLAAASENTVSIFDIENNNKRVN), 675 to 715 (GHSS…HELS), 717 to 755 (SGNKFHSVVFHPSYPDLLVIGGYQAIELWNTMENKCMTV), and 757 to 787 (GHECVISALAQSPSTGVVASASHDKSVKIWK).

In terms of assembly, forms corepressor complexes with SLK1 and SLK2; LUH is the transcription repressor subunit and SLK1 and SLK2 the specific DNA-binding adapters. Interacts with SEU. Binds to YAB3, YAB5 and YAB1/FIL; these complexes promote adaxial cell identity in leaves as well as embryonic shoot apical meristem (SAM) initiation and postembryonic SAM maintenance. In terms of tissue distribution, expressed in roots, stems, leaves, seedlings, apex, flowers, siliques, flower organs and seeds (including seed coat).

It localises to the nucleus. Its function is as follows. Transcription repressor subunit of the SEU-SLK1 and SEU-SLK2 transcriptional corepressor of abiotic stress (e.g. salt and osmotic stress) response genes, by means of an epigenetic process involving histone modification (e.g. H3K9 and H3K14 acetylation), probably by recruiting HDAC, to facilitate the condensation of chromatin thus preventing transcription at the target genes. Can also act as a transcription activator. Implicated in embryo and floral development. Involved in post-synthesis cell wall modifications necessary for mucilage extrusion from seeds upon imbibition, probably by promoting the expression of genes required for mucilage maturation (e.g. MUM2). Regulates the maintenance on leaf polarity and meristem activity as well as the initiation of embryonic shoot apical meristem (SAM) development. The protein is Transcriptional corepressor LEUNIG_HOMOLOG of Arabidopsis thaliana (Mouse-ear cress).